The following is a 200-amino-acid chain: Recombination protein RecR (200 aa).

Residues 59–74 (CSVCFHLSADPVCDIC) form a C4-type zinc finger. Residues 82–176 (TVICVVADSR…RVTRIAFGLP (95 aa)) enclose the Toprim domain.

The protein belongs to the RecR family.

Functionally, may play a role in DNA repair. It seems to be involved in an RecBC-independent recombinational process of DNA repair. It may act with RecF and RecO. This Acaryochloris marina (strain MBIC 11017) protein is Recombination protein RecR.